A 364-amino-acid chain; its full sequence is Inner membrane ABC transporter permease protein YejB (364 aa).

Topologically, residues 1–8 are periplasmic; that stretch reads MGAYLIRR. Residues 9-29 form a helical membrane-spanning segment; the sequence is LLLVIPTLWAIITINFFIVQI. The Cytoplasmic portion of the chain corresponds to 30–37; that stretch reads APGGPVDQ. Residues 38-58 form a helical membrane-spanning segment; sequence AIAAIEFGNAGVLPGAGGEGV. At 59–135 the chain is on the periplasmic side; that stretch reads RASHAQTGVG…LTLIKDSLPV (77 aa). In terms of domain architecture, ABC transmembrane type-1 spans 133–348; the sequence is LPVSITLGLW…LIGLLLNIVS (216 aa). The helical transmembrane segment at 136 to 156 threads the bilayer; the sequence is SITLGLWSTLIIYLVSIPLGI. Residues 157–172 lie on the Cytoplasmic side of the membrane; the sequence is RKAVYNGSRFDVWSSA. A helical membrane pass occupies residues 173 to 193; it reads FIIIGYAIPAFLFAILLIVFF. The Periplasmic portion of the chain corresponds to 194–224; it reads AGGSYFDLFPLRGLVSANFDSLPWYQKITDY. Residues 225 to 245 traverse the membrane as a helical segment; it reads LWHITLPVLATVIGGFAALTM. Residues 246–284 lie on the Cytoplasmic side of the membrane; sequence LTKNSFLDEVRKQYVVTARAKGVSEKNILWKHVFRNAML. The helical transmembrane segment at 285–305 threads the bilayer; that stretch reads LVIAGFPATFISMFFTGSLLI. Topologically, residues 306–326 are periplasmic; that stretch reads EVMFSLNGLGLLGYEATVSRD. Residues 327–347 form a helical membrane-spanning segment; it reads YPVMFGTLYIFTLIGLLLNIV. Residues 348–364 are Cytoplasmic-facing; it reads SDISYTLVDPRIDFEGR.

This sequence belongs to the binding-protein-dependent transport system permease family. OppBC subfamily.

The protein resides in the cell inner membrane. Probably part of a binding-protein-dependent transport system. Probably responsible for the translocation of the substrate across the membrane. This Escherichia coli O157:H7 protein is Inner membrane ABC transporter permease protein YejB (yejB).